We begin with the raw amino-acid sequence, 114 residues long: Superoxide dismutase [Cu-Zn] (114 aa).

Cu cation-binding residues include His-37, His-39, and His-54. Zn(2+) contacts are provided by His-54, His-62, His-71, and Asp-74. Residues His-54 to Ala-80 form a disordered region. Residues Asn-59–Gly-73 show a composition bias toward basic and acidic residues. His-111 is a binding site for Cu cation.

This sequence belongs to the Cu-Zn superoxide dismutase family. Homodimer. Requires Cu cation as cofactor. It depends on Zn(2+) as a cofactor.

It localises to the cytoplasm. It carries out the reaction 2 superoxide + 2 H(+) = H2O2 + O2. Functionally, destroys radicals which are normally produced within the cells and which are toxic to biological systems. The chain is Superoxide dismutase [Cu-Zn] from Drosophila tolteca (Fruit fly).